The primary structure comprises 432 residues: uncharacterized protein (432 aa).

Disordered stretches follow at residues D37–C61, R127–Y151, and S298–C378. Positions D312 to P335 are enriched in polar residues. The span at S341–H366 shows a compositional bias: low complexity.

This is an uncharacterized protein from Arabidopsis thaliana (Mouse-ear cress).